We begin with the raw amino-acid sequence, 564 residues long: Membrane protein insertase YidC (564 aa).

A helical transmembrane segment spans residues 7 to 24 (VLWVVFSFSLLMLWDNYN). The segment covering 43–60 (KPAAATDDGKTAAAPTAD) has biased composition (low complexity). The segment at 43-76 (KPAAATDDGKTAAAPTADVPTSSAHAANATGVPD) is disordered. Transmembrane regions (helical) follow at residues 293–313 (LATN…APGA), 341–361 (VKDY…MIQI), 364–384 (LLGN…LAFF), 438–458 (MPIV…LASV), 483–503 (IGSF…SMFI), and 524–544 (PIAF…YWVV).

Belongs to the OXA1/ALB3/YidC family. Type 1 subfamily. Interacts with the Sec translocase complex via SecD. Specifically interacts with transmembrane segments of nascent integral membrane proteins during membrane integration.

Its subcellular location is the cell inner membrane. Required for the insertion and/or proper folding and/or complex formation of integral membrane proteins into the membrane. Involved in integration of membrane proteins that insert both dependently and independently of the Sec translocase complex, as well as at least some lipoproteins. Aids folding of multispanning membrane proteins. The protein is Membrane protein insertase YidC of Janthinobacterium sp. (strain Marseille) (Minibacterium massiliensis).